The chain runs to 377 residues: Probable trehalose-phosphate phosphatase G (377 aa).

Residues 1-20 (MDLNINKTTPVLSDPTTPVS) form a disordered region.

It belongs to the trehalose phosphatase family. Requires a divalent metal cation as cofactor.

The catalysed reaction is alpha,alpha-trehalose 6-phosphate + H2O = alpha,alpha-trehalose + phosphate. It functions in the pathway glycan biosynthesis; trehalose biosynthesis. Removes the phosphate from trehalose 6-phosphate to produce free trehalose. Trehalose accumulation in plant may improve abiotic stress tolerance. This is Probable trehalose-phosphate phosphatase G (TPPG) from Arabidopsis thaliana (Mouse-ear cress).